We begin with the raw amino-acid sequence, 150 residues long: Arginine repressor (150 aa).

Belongs to the ArgR family.

It is found in the cytoplasm. The protein operates within amino-acid biosynthesis; L-arginine biosynthesis [regulation]. Functionally, regulates arginine biosynthesis genes. The chain is Arginine repressor from Clostridium kluyveri (strain NBRC 12016).